The chain runs to 1033 residues: RNA cytidine acetyltransferase (1033 aa).

ATP contacts are provided by residues 285 to 294 and arginine 465; that span reads GRGKSAALGL. The N-acetyltransferase domain occupies 560 to 694; the sequence is VDLKNPKLPD…IHVRDAKTMP (135 aa). Acetyl-CoA is bound by residues 626 to 628, 633 to 639, and arginine 727; these read IAV and VKMGYGT. The interval 988-1033 is disordered; it reads ENQIQKTNGKGARVVSIKGEKRKNNSLDASDKKTKEKPSSKKKFRK. The span at 1005 to 1026 shows a compositional bias: basic and acidic residues; it reads KGEKRKNNSLDASDKKTKEKPS.

This sequence belongs to the RNA cytidine acetyltransferase family. NAT10 subfamily. As to quaternary structure, interacts with tan1.

The protein localises to the nucleus. It localises to the nucleolus. It catalyses the reaction a cytidine in 18S rRNA + acetyl-CoA + ATP + H2O = an N(4)-acetylcytidine in 18S rRNA + ADP + phosphate + CoA + H(+). It carries out the reaction a cytidine in tRNA + acetyl-CoA + ATP + H2O = an N(4)-acetylcytidine in tRNA + ADP + phosphate + CoA + H(+). RNA cytidine acetyltransferase with specificity toward both 18S rRNA and tRNAs. Catalyzes the formation of N(4)-acetylcytidine (ac4C) at positions 1297 and 1815 in 18S rRNA. Required for early nucleolar cleavages of precursor rRNA at sites A0, A1 and A2 during 18S rRNA synthesis. Catalyzes the formation of ac4C in serine and leucine tRNAs. Requires the tRNA-binding adapter protein tan1 for full tRNA acetyltransferase activity but not for 18S rRNA acetylation. The chain is RNA cytidine acetyltransferase from Schizosaccharomyces pombe (strain 972 / ATCC 24843) (Fission yeast).